The primary structure comprises 122 residues: E3 ubiquitin-protein ligase PPP1R11 (122 aa).

Polar residues predominate over residues 1–12 (MAEVPGTSSETI). The disordered stretch occupies residues 1-33 (MAEVPGTSSETITETVQTGTPPPPQQEGRSLTI). The residue at position 20 (T20) is a Phosphothreonine. Residues 55–65 (HLGRRSSKCCC) are atypical RING finger domain 1. The tract at residues 72 to 122 (QFGESSSESEGDDEEGCGSAHCILGHGRRGHGQREGGGTTVPPSSGGTNPH) is disordered. Over residues 78 to 87 (SESEGDDEEG) the composition is skewed to acidic residues. Residues 88–97 (CGSAHCILGH) are atypical RING finger domain 2. Positions 111-122 (TVPPSSGGTNPH) are enriched in low complexity.

The enzyme catalyses S-ubiquitinyl-[E2 ubiquitin-conjugating enzyme]-L-cysteine + [acceptor protein]-L-lysine = [E2 ubiquitin-conjugating enzyme]-L-cysteine + N(6)-ubiquitinyl-[acceptor protein]-L-lysine.. Its pathway is protein modification; protein ubiquitination. Its function is as follows. Atypical E3 ubiquitin-protein ligase which ubiquitinates TLR2 at 'Lys-754' leading to its degradation by the proteasome. Inhibitor of protein phosphatase 1. In Danio rerio (Zebrafish), this protein is E3 ubiquitin-protein ligase PPP1R11 (ppp1r11).